The following is a 238-amino-acid chain: Probable transcriptional regulatory protein STER_0242 (238 aa).

This sequence belongs to the TACO1 family. YeeN subfamily.

The protein resides in the cytoplasm. This Streptococcus thermophilus (strain ATCC BAA-491 / LMD-9) protein is Probable transcriptional regulatory protein STER_0242.